Consider the following 180-residue polypeptide: Ribulose bisphosphate carboxylase small subunit, chloroplastic 4 (180 aa).

A chloroplast-targeting transit peptide spans Met1–Ser56.

Belongs to the RuBisCO small chain family. Heterohexadecamer of 8 large and 8 small subunits. In terms of assembly, (Microbial infection) Binds to tobamovirus movement protein; this interaction seems required for viral systemic movement.

It localises to the plastid. The protein localises to the chloroplast. It is found in the cell junction. The protein resides in the plasmodesma. Functionally, ruBisCO catalyzes two reactions: the carboxylation of D-ribulose 1,5-bisphosphate, the primary event in carbon dioxide fixation, as well as the oxidative fragmentation of the pentose substrate. Both reactions occur simultaneously and in competition at the same active site. Although the small subunit is not catalytic it is essential for maximal activity. Involved in antiviral defenses. This is Ribulose bisphosphate carboxylase small subunit, chloroplastic 4 from Solanum lycopersicum (Tomato).